The chain runs to 224 residues: Flagellar L-ring protein (224 aa).

Positions 1–15 are cleaved as a signal peptide; that stretch reads MIKYIALASVVLLVG. Cys16 carries the N-palmitoyl cysteine lipid modification. Cys16 carries the S-diacylglycerol cysteine lipid modification.

This sequence belongs to the FlgH family. The basal body constitutes a major portion of the flagellar organelle and consists of four rings (L,P,S, and M) mounted on a central rod.

The protein localises to the cell outer membrane. Its subcellular location is the bacterial flagellum basal body. Assembles around the rod to form the L-ring and probably protects the motor/basal body from shearing forces during rotation. This chain is Flagellar L-ring protein, found in Shewanella frigidimarina (strain NCIMB 400).